The sequence spans 538 residues: Putative cysteine ligase BshC (538 aa).

Belongs to the BshC family.

Functionally, involved in bacillithiol (BSH) biosynthesis. May catalyze the last step of the pathway, the addition of cysteine to glucosamine malate (GlcN-Mal) to generate BSH. In Halalkalibacterium halodurans (strain ATCC BAA-125 / DSM 18197 / FERM 7344 / JCM 9153 / C-125) (Bacillus halodurans), this protein is Putative cysteine ligase BshC.